Here is a 235-residue protein sequence, read N- to C-terminus: Small ribosomal subunit protein uS3 (235 aa).

Positions 39 to 107 (IRDFIKKECH…ELHLNIVEVR (69 aa)) constitute a KH type-2 domain. The tract at residues 213 to 235 (AARDRKAQELQDGPAPRGAGGRR) is disordered.

The protein belongs to the universal ribosomal protein uS3 family. In terms of assembly, part of the 30S ribosomal subunit. Forms a tight complex with proteins S10 and S14.

Its function is as follows. Binds the lower part of the 30S subunit head. Binds mRNA in the 70S ribosome, positioning it for translation. The chain is Small ribosomal subunit protein uS3 from Roseobacter denitrificans (strain ATCC 33942 / OCh 114) (Erythrobacter sp. (strain OCh 114)).